We begin with the raw amino-acid sequence, 284 residues long: Tryptophan synthase alpha chain (284 aa).

Catalysis depends on proton acceptor residues E55 and D66.

Belongs to the TrpA family. As to quaternary structure, tetramer of two alpha and two beta chains.

The catalysed reaction is (1S,2R)-1-C-(indol-3-yl)glycerol 3-phosphate + L-serine = D-glyceraldehyde 3-phosphate + L-tryptophan + H2O. Its pathway is amino-acid biosynthesis; L-tryptophan biosynthesis; L-tryptophan from chorismate: step 5/5. Functionally, the alpha subunit is responsible for the aldol cleavage of indoleglycerol phosphate to indole and glyceraldehyde 3-phosphate. This Methanococcus voltae protein is Tryptophan synthase alpha chain.